The sequence spans 634 residues: MSDKQTDKDEKTGLSRRGFLGASALTRSAVAASGLVGGVMTRDSWAAAAKEAQQKIHVAPGELDEYYGFWSGGHQGEVRVLGVPSMRELMRIPVFNVDSATGWGLTNESRHILGDTAKFLNGDCHHPHISMTDGKYDGKYLFINDKANSRVARIRLDIMKCDKITTIPNVQAIHGLRLQKVPHTKYVFCNAEFIIPHPNDGKVFDLEDENSFTMYNAVDAETMEVAFQVIVDGNLDNTDADYTGRFTAATCYNSEKAFDLGGMMRNERDWVVVFDISAVEKEIKAGRFITLGDSKVPVVDGRKKDGKDSVVTRYIPVPKNPHGLNTSTDGKYFIANGKLSPTCSMIAIDLLPDLFAGKLKDPRDVVVGEPELGLGPLHTTFDGRGNAYTTLFIDSQVVKWNMEEARRAYKGEKVNYIKQKLDVHYQPGHLHASLCETSEADGKWLVALSKFSKDRFLPTGPLHPENDQLIDISGDVMKLVHDGPTFAEPHDCIMARRDQIKTRKIWDRNDPFFAPTVAMAKKDGINLEEDNKVIRDGNKVRVYMTSMAPAYGLTEFKVKQGNEVTVVITNMDQIEDVSHGFVMVNHGVSMEISPQQTSSITFIADKPGLHWYYCSWFCHALHMEMVGRMMVEPA.

The tat-type signal signal peptide spans 1–49 (MSDKQTDKDEKTGLSRRGFLGASALTRSAVAASGLVGGVMTRDSWAAAA). Residues His-125, His-126, and His-174 each contribute to the Cu cation site. Positions 252, 255, 263, 269, and 320 each coordinate Ca(2+). His-322, His-378, and His-429 together coordinate Cu cation. The Ca(2+) site is built by Lys-450 and Glu-465. Positions 490, 579, 614, 616, 618, 622, and 625 each coordinate Cu cation. Positions 538-634 (NKVRVYMTSM…MVGRMMVEPA (97 aa)) are COX2-like.

Belongs to the NosZ family. The protein in the C-terminal section; belongs to the cytochrome c oxidase subunit 2 family. In terms of assembly, homodimer. Ca(2+) is required as a cofactor. Requires Cu cation as cofactor. In terms of processing, predicted to be exported by the Tat system. The position of the signal peptide cleavage has not been experimentally proven.

The protein localises to the periplasm. The catalysed reaction is N2 + 2 Fe(III)-[cytochrome c] + H2O = nitrous oxide + 2 Fe(II)-[cytochrome c] + 2 H(+). It functions in the pathway nitrogen metabolism; nitrate reduction (denitrification); dinitrogen from nitrate: step 4/4. Its function is as follows. Nitrous-oxide reductase is part of a bacterial respiratory system which is activated under anaerobic conditions in the presence of nitrate or nitrous oxide. The chain is Nitrous-oxide reductase (nosZ) from Pseudomonas aeruginosa.